The chain runs to 615 residues: Neurosecretory protein VGF (615 aa).

Positions 1 to 22 (MKALRLSASALFCLLLINGLGA) are cleaved as a signal peptide. Disordered stretches follow at residues 22–201 (AAPP…ESPG) and 218–257 (PERAPLPPPAPSQFQARMPDSGPLPETHKFGEGVSSPKTH). Pro residues-rich tracts occupy residues 25 to 35 (PGRPEAQPPPL) and 129 to 141 (PESPEPAAPPRPQ). Residues 179 to 194 (ETAAAETETRTHTLTR) are compositionally biased toward low complexity. Position 310 is a pyrrolidone carboxylic acid (glutamine 310). Residues 342 to 600 (RQRGLGGRGL…EAEERRLQEQ (259 aa)) are disordered. The segment covering 378–394 (VGEEDEEAAEAEAEAEE) has biased composition (acidic residues). Residues 415–433 (AEDKRSQEETPGHRRKEAE) show a composition bias toward basic and acidic residues. Serine 420 carries the post-translational modification Phosphoserine; by FAM20C. Phosphothreonine; by FAM20C is present on threonine 424. A compositionally biased stretch (acidic residues) spans 434–448 (GTEEGGEEEDDEEMD). Positions 487-497 (PPEPVPPPRAA) are enriched in pro residues. At proline 577 the chain carries Proline amide. Residues 577-599 (PGREAQARRAQEEAEAEERRLQE) are compositionally biased toward basic and acidic residues.

Interacts with HSPA8 on cell membrane. Interacts with C3AR1. Interacts with C1QBP. Post-translationally, multiple peptides are derived from VGF, with activities in synaptic plasticity, antidepression, penile erection, autonomic activation, and increases in energy expenditure. In terms of tissue distribution, central and peripheral nervous systems, synthesized exclusively in neuronal and neuroendocrine cells.

The protein resides in the secreted. It is found in the cytoplasmic vesicle. It localises to the secretory vesicle. Functionally, secreted polyprotein that is packaged and proteolytically processed by prohormone convertases PCSK1 and PCSK2 in a cell-type-specific manner. VGF and peptides derived from its processing play many roles in neurogenesis and neuroplasticity associated with learning, memory, depression and chronic pain. Plays a role in the control of body fluid homeostasis by regulating vasopressin release. Suppresses presynaptic glutamatergic neurons connected to vasopressin neurons. Its function is as follows. Plays a role in the control of body fluid homeostasis by regulating vasopressin release. Activates GABAergic interneurons which are inhibitory neurons of the nervous system and thereby suppresses presynaptic glutamatergic neurons. Also stimulates feeding behavior in an orexin-dependent manner in the hypothalamus. Functions as a positive regulator for the activation of orexin neurons resulting in elevated gastric acid secretion and gastric emptying. In terms of biological role, secreted multifunctional neuropeptide that binds to different cell receptors and thereby plays multiple physiological roles including modulation of energy expenditure, pain, response to stress, gastric regulation, glucose homeostasis as well as lipolysis. Activates the G-protein-coupled receptor C3AR1 via a folding-upon-binding mechanism leading to enhanced lipolysis in adipocytes. Interacts with C1QBP receptor in macrophages and microglia causing increased levels of intracellular calcium and hypersensitivity. Functionally, plays a role in the regulation of memory formation and depression-related behaviors potentially by influencing synaptic plasticity and neurogenesis. Induces acute and transient activation of the NTRK2/TRKB receptor and subsequent CREB phosphorylation. Also induces insulin secretion in insulinoma cells by increasing intracellular calcium mobilization. Has bactericidal activity against M.luteus, and antifungal activity against P. Pastoris. The protein is Neurosecretory protein VGF (VGF) of Homo sapiens (Human).